The primary structure comprises 263 residues: Expansin-like A3 (263 aa).

The first 20 residues, 1 to 20, serve as a signal peptide directing secretion; it reads MRSFLYLIVVIFLFSSSVNA. One can recognise an Expansin-like EG45 domain in the interval 41 to 147; that stretch reads SGACAYGPMA…QRVPCNYGKR (107 aa). Asparagine 99 and asparagine 102 each carry an N-linked (GlcNAc...) asparagine glycan. The Expansin-like CBD domain occupies 161 to 243; the sequence is NYLAIKLLYQ…NWNSGRIYDA (83 aa).

The protein belongs to the expansin family. Expansin-like A subfamily.

The protein resides in the secreted. This chain is Expansin-like A3 (EXLA3), found in Arabidopsis thaliana (Mouse-ear cress).